We begin with the raw amino-acid sequence, 323 residues long: MKYLDVDGIGQVSRIGLGTWQFGSREWGYGDRYATGAARDIVKRARALGVTLFDTAEIYGLGKSERILGEALGDDRTEVVVASKVFPVAPFPAVIKNRERASARRLQLNRIPLYQIHQPNPVVPDSVIMPGMRDLLDSGDIGAAGVSNYSLARWRKADAALGRPVVSNQVHFSLAHPDALEDLVPFAELENRIVIAYSPLAQGLLGGKYGLENRPGGVRALNPLFGTENLRRIEPLLATLRAIAVDVDAKPAQVALAWLISLPGVVAIPGASSVEQLEFNVAAADIELSAQSRDALTDAARAFRPVSTGRFLTDMVREKVSRR.

Residue Tyr59 is the Proton donor of the active site. 198-208 (SPLAQGLLGGK) contacts NADP(+).

This sequence belongs to the aldo/keto reductase family. Aldo/keto reductase 2 subfamily.

This is an uncharacterized protein from Mycobacterium tuberculosis (strain CDC 1551 / Oshkosh).